The sequence spans 164 residues: Cytochrome c-type biogenesis protein CcmE (164 aa).

The Cytoplasmic segment spans residues 1-8; it reads MNPRRKSR. The helical; Signal-anchor for type II membrane protein transmembrane segment at 9 to 29 threads the bilayer; the sequence is LYLAMVVLIGISLTTTLVLYA. Residues 30–164 are Periplasmic-facing; that stretch reads LRSNIDLFYT…RGTNTTGNAL (135 aa). Heme is bound by residues H130 and Y134. A disordered region spans residues 140–164; it reads EEAMKENHSRPAAAYRGTNTTGNAL.

Belongs to the CcmE/CycJ family.

It localises to the cell inner membrane. Functionally, heme chaperone required for the biogenesis of c-type cytochromes. Transiently binds heme delivered by CcmC and transfers the heme to apo-cytochromes in a process facilitated by CcmF and CcmH. In Yersinia pseudotuberculosis serotype O:3 (strain YPIII), this protein is Cytochrome c-type biogenesis protein CcmE.